The chain runs to 355 residues: Phosphoserine aminotransferase (355 aa).

L-glutamate is bound at residue Arg41. Residues 75–76 (AS), Trp99, Thr147, Asp166, and Gln189 each bind pyridoxal 5'-phosphate. Lys190 carries the N6-(pyridoxal phosphate)lysine modification. 231-232 (NT) contacts pyridoxal 5'-phosphate.

The protein belongs to the class-V pyridoxal-phosphate-dependent aminotransferase family. SerC subfamily. Homodimer. The cofactor is pyridoxal 5'-phosphate.

The protein localises to the cytoplasm. It catalyses the reaction O-phospho-L-serine + 2-oxoglutarate = 3-phosphooxypyruvate + L-glutamate. It carries out the reaction 4-(phosphooxy)-L-threonine + 2-oxoglutarate = (R)-3-hydroxy-2-oxo-4-phosphooxybutanoate + L-glutamate. It functions in the pathway amino-acid biosynthesis; L-serine biosynthesis; L-serine from 3-phospho-D-glycerate: step 2/3. The protein operates within cofactor biosynthesis; pyridoxine 5'-phosphate biosynthesis; pyridoxine 5'-phosphate from D-erythrose 4-phosphate: step 3/5. Its function is as follows. Catalyzes the reversible conversion of 3-phosphohydroxypyruvate to phosphoserine and of 3-hydroxy-2-oxo-4-phosphonooxybutanoate to phosphohydroxythreonine. The protein is Phosphoserine aminotransferase of Bacteroides fragilis (strain ATCC 25285 / DSM 2151 / CCUG 4856 / JCM 11019 / LMG 10263 / NCTC 9343 / Onslow / VPI 2553 / EN-2).